The primary structure comprises 148 residues: Cytochrome c-552 (148 aa).

An N-terminal signal peptide occupies residues 1–17; sequence MKRTLMAFLLLGGLALA. Gln-18 carries the pyrrolidone carboxylic acid modification. Heme c contacts are provided by Cys-28, Cys-31, His-32, and Met-86.

In terms of processing, binds 1 heme c group covalently per subunit.

This monoheme basic protein appears to function as an electron donor to cytochrome oxidase in T.thermophilus. This is Cytochrome c-552 (cycA) from Thermus thermophilus (strain ATCC 27634 / DSM 579 / HB8).